The following is a 335-amino-acid chain: Beta-hexosaminidase (335 aa).

Residues D60, R68, R133, and K163 to H164 each bind substrate. H176 acts as the Proton donor/acceptor in catalysis. The active-site Nucleophile is the D247.

The protein belongs to the glycosyl hydrolase 3 family. NagZ subfamily.

It is found in the cytoplasm. The catalysed reaction is Hydrolysis of terminal non-reducing N-acetyl-D-hexosamine residues in N-acetyl-beta-D-hexosaminides.. It participates in cell wall biogenesis; peptidoglycan recycling. Plays a role in peptidoglycan recycling by cleaving the terminal beta-1,4-linked N-acetylglucosamine (GlcNAc) from peptide-linked peptidoglycan fragments, giving rise to free GlcNAc, anhydro-N-acetylmuramic acid and anhydro-N-acetylmuramic acid-linked peptides. The sequence is that of Beta-hexosaminidase from Xylella fastidiosa (strain M23).